The primary structure comprises 267 residues: Tryptophan synthase alpha chain (267 aa).

Catalysis depends on proton acceptor residues glutamate 39 and aspartate 50.

The protein belongs to the TrpA family. In terms of assembly, tetramer of two alpha and two beta chains.

The enzyme catalyses (1S,2R)-1-C-(indol-3-yl)glycerol 3-phosphate + L-serine = D-glyceraldehyde 3-phosphate + L-tryptophan + H2O. Its pathway is amino-acid biosynthesis; L-tryptophan biosynthesis; L-tryptophan from chorismate: step 5/5. Functionally, the alpha subunit is responsible for the aldol cleavage of indoleglycerol phosphate to indole and glyceraldehyde 3-phosphate. This chain is Tryptophan synthase alpha chain, found in Helicobacter hepaticus (strain ATCC 51449 / 3B1).